Here is a 334-residue protein sequence, read N- to C-terminus: Fructose-1,6-bisphosphatase class 1 (334 aa).

Mg(2+) is bound by residues Glu90, Asp113, Leu115, and Asp116. Substrate-binding positions include 116–119 (DGSS), Asn209, Tyr242, and Lys272. Glu278 is a binding site for Mg(2+).

It belongs to the FBPase class 1 family. Homotetramer. Mg(2+) serves as cofactor.

The protein localises to the cytoplasm. The catalysed reaction is beta-D-fructose 1,6-bisphosphate + H2O = beta-D-fructose 6-phosphate + phosphate. Its pathway is carbohydrate biosynthesis; gluconeogenesis. The polypeptide is Fructose-1,6-bisphosphatase class 1 (Actinobacillus pleuropneumoniae serotype 7 (strain AP76)).